We begin with the raw amino-acid sequence, 1317 residues long: ABC transporter C family member 14 (1317 aa).

One can recognise an ABC transmembrane type-1 1 domain in the interval 119–404; the sequence is NKYALISNIF…LPEDIYKAIG (286 aa). The next 5 helical transmembrane spans lie at 127-147, 156-176, 249-269, 341-361, and 375-395; these read IFITIFIFLSPICLKFLINYI, SILKGILLCCLLCISILGQSI, ILILLGLLCYVVGPSGLVGFG, VLFWIFDHMMIETNATLVLVS, and LDVTFTAMTIFANLKLPLIYL. The interval 426 to 451 is disordered; it reads ENNQNINFNNNNNNNNNNKNNNNNDD. Residues 427–449 show a composition bias toward low complexity; the sequence is NNQNINFNNNNNNNNNNKNNNNN. Residues 490–710 enclose the ABC transporter 1 domain; it reads ENEENIKINE…ISDKNDPNLI (221 aa). 522 to 529 is a binding site for ATP; it reads GVVGSGKT. 5 helical membrane-spanning segments follow: residues 734–754, 778–798, 871–891, 969–989, and 992–1012; these read YFSYGTSGVTLFITISLFFIG, DSFYIGYYLLIIGIFVSLLMI, LISIVFIIPIIIIPLTLLFII, LEVMGCIMVFFTSLAAALFTS, and GLAALSVTTALSLNGYLSWGV. The 284-residue stretch at 744-1027 folds into the ABC transmembrane type-1 2 domain; sequence LFITISLFFI…LEVKMNSFQR (284 aa). Positions 1071-1306 constitute an ABC transporter 2 domain; the sequence is IEFKNVEIKY…PNSKFNKLIK (236 aa). Residue 1105-1112 participates in ATP binding; it reads GRTGAGKT.

Belongs to the ABC transporter superfamily. ABCC family. Conjugate transporter (TC 3.A.1.208) subfamily.

The protein localises to the membrane. This Dictyostelium discoideum (Social amoeba) protein is ABC transporter C family member 14 (abcC14).